The following is a 247-amino-acid chain: Fibroblast growth factor 14 (247 aa).

Disordered regions lie at residues 1–38 (MAAA…KNRG) and 214–247 (VGET…SKTT). Residues 15-25 (QAREQHWDRPS) are compositionally biased toward basic and acidic residues.

It belongs to the heparin-binding growth factors family. As to quaternary structure, interacts with SCN8A. Nervous system.

It is found in the nucleus. Functionally, probably involved in nervous system development and function. This chain is Fibroblast growth factor 14 (FGF14), found in Homo sapiens (Human).